We begin with the raw amino-acid sequence, 306 residues long: Homoserine O-acetyltransferase (306 aa).

Catalysis depends on C142, which acts as the Acyl-thioester intermediate. Residues K163 and S192 each contribute to the substrate site. Residue H235 is the Proton acceptor of the active site. E237 is a catalytic residue. R249 lines the substrate pocket.

This sequence belongs to the MetA family.

It localises to the cytoplasm. It carries out the reaction L-homoserine + acetyl-CoA = O-acetyl-L-homoserine + CoA. The protein operates within amino-acid biosynthesis; L-methionine biosynthesis via de novo pathway; O-acetyl-L-homoserine from L-homoserine: step 1/1. Functionally, transfers an acetyl group from acetyl-CoA to L-homoserine, forming acetyl-L-homoserine. In Brucella melitensis biotype 1 (strain ATCC 23456 / CCUG 17765 / NCTC 10094 / 16M), this protein is Homoserine O-acetyltransferase.